Consider the following 240-residue polypeptide: Small ribosomal subunit protein uS3 (240 aa).

Residues 39–109 enclose the KH type-2 domain; the sequence is IRQYVEKNLS…QIRINVVEVA (71 aa). The tract at residues 214–240 is disordered; sequence EEQAPAQPATTPKRQRRRQQFEDRSNE.

The protein belongs to the universal ribosomal protein uS3 family. Part of the 30S ribosomal subunit. Forms a tight complex with proteins S10 and S14.

Its function is as follows. Binds the lower part of the 30S subunit head. Binds mRNA in the 70S ribosome, positioning it for translation. The sequence is that of Small ribosomal subunit protein uS3 from Gloeothece citriformis (strain PCC 7424) (Cyanothece sp. (strain PCC 7424)).